Reading from the N-terminus, the 497-residue chain is PHD finger protein 10 (497 aa).

Residues 1-61 (MAAAGPGAAL…SSRSCETSSQ (61 aa)) form a disordered region. Residues Ser-11, Ser-35, and Ser-49 each carry the phosphoserine modification. Positions 88-184 (MLQEQVSEYL…HYKEYSQMQQ (97 aa)) are essential to induce neural progenitor proliferation. Residues 88 to 294 (MLQEQVSEYL…PPLDPELPAL (207 aa)) are SAY. Lys-240 participates in a covalent cross-link: Glycyl lysine isopeptide (Lys-Gly) (interchain with G-Cter in SUMO2). Position 269 is a phosphoserine (Ser-269). Low complexity predominate over residues 284 to 295 (EPPLDPELPALD). The interval 284-367 (EPPLDPELPA…KRSVLSKSVP (84 aa)) is disordered. Residues 291–333 (LPALDSDGDSDDGEDGGGDEKRKNKGTSDSSSGNVSEGDSPPD) form an essential to induce neural progenitor proliferation region. 4 positions are modified to phosphoserine: Ser-296, Ser-300, Ser-326, and Ser-330. Residues 296-307 (SDGDSDDGEDGG) are compositionally biased toward acidic residues. The span at 317–327 (TSDSSSGNVSE) shows a compositional bias: polar residues. The segment covering 344–358 (KSKDKMATPRKDGSK) has biased composition (basic and acidic residues). Residues 378-435 (LCGICLKGKESNKKGKAESLIHCSQCDNSGHPSCLDMTMELVSMIKTYPWQCMECKTC) form a PHD-type 1; degenerate zinc finger. Residue Lys-384 forms a Glycyl lysine isopeptide (Lys-Gly) (interchain with G-Cter in SUMO2) linkage. The PHD-type 2; degenerate zinc-finger motif lies at 437–480 (ICGQPHHEEEMMFCDVCDRGYHTFCVGLGAIPSGRWICDCCQRA).

The protein belongs to the SAYP family. Component of neural progenitors-specific chromatin remodeling complex (npBAF complex) composed of at least, ARID1A/BAF250A or ARID1B/BAF250B, SMARCD1/BAF60A, SMARCD3/BAF60C, SMARCA2/BRM/BAF190B, SMARCA4/BRG1/BAF190A, SMARCB1/BAF47, SMARCC1/BAF155, SMARCE1/BAF57, SMARCC2/BAF170, PHF10/BAF45A, ACTL6A/BAF53A and actin. Interacts with ACTL6A/BAF53A, SMARCA2/BRM/BAF190B, SMARCA4/BRG1/BAF190A and PBRM1/BAF180.

The protein resides in the nucleus. Its function is as follows. Involved in transcription activity regulation by chromatin remodeling. Belongs to the neural progenitors-specific chromatin remodeling complex (npBAF complex) and is required for the proliferation of neural progenitors. During neural development a switch from a stem/progenitor to a post-mitotic chromatin remodeling mechanism occurs as neurons exit the cell cycle and become committed to their adult state. The transition from proliferating neural stem/progenitor cells to post-mitotic neurons requires a switch in subunit composition of the npBAF and nBAF complexes. As neural progenitors exit mitosis and differentiate into neurons, npBAF complexes which contain ACTL6A/BAF53A and PHF10/BAF45A, are exchanged for homologous alternative ACTL6B/BAF53B and DPF1/BAF45B or DPF3/BAF45C subunits in neuron-specific complexes (nBAF). The npBAF complex is essential for the self-renewal/proliferative capacity of the multipotent neural stem cells. The nBAF complex along with CREST plays a role regulating the activity of genes essential for dendrite growth. This Rattus norvegicus (Rat) protein is PHD finger protein 10 (Phf10).